A 187-amino-acid polypeptide reads, in one-letter code: uncharacterized protein (187 aa).

The signal sequence occupies residues 1–25 (MSKFVKTAIAAAMVMGAFTSTATIA).

This sequence belongs to the fimbrial protein family.

In terms of biological role, part of the yfcOPQRSUV fimbrial operon. Could contribute to adhesion to various surfaces in specific environmental niches. Increases adhesion to eukaryotic T24 bladder epithelial cells in the absence of fim genes. This is an uncharacterized protein from Escherichia coli (strain K12).